The sequence spans 470 residues: Neuraminidase (470 aa).

Residues 1 to 6 (MNPNQK) are Intravirion-facing. A helical transmembrane segment spans residues 7 to 27 (IICISATGMTLSVVSLLIGIA). An involved in apical transport and lipid raft association region spans residues 11–33 (SATGMTLSVVSLLIGIANLGLNI). Residues 28 to 470 (NLGLNIGLHY…HDGAEIIYFK (443 aa)) are Virion surface-facing. Residues 36-88 (HYKVGDTPGVNVPNENGTNSTTTIINNNTQNNFTNITNIIQTKTEEKTFLNLT) form a hypervariable stalk region region. Residues N51, N54, N62, N67, N70, and N86 are each glycosylated (N-linked (GlcNAc...) asparagine; by host). The segment at 91–470 (LCEVNSWHIL…HDGAEIIYFK (380 aa)) is head of neuraminidase. Intrachain disulfides connect C92–C419, C124–C129, C184–C231, C233–C238, C279–C292, C281–C290, C319–C337, and C423–C449. Residue R118 participates in substrate binding. N146 is a glycosylation site (N-linked (GlcNAc...) asparagine; by host). D151 acts as the Proton donor/acceptor in catalysis. R152 lines the substrate pocket. N201 carries an N-linked (GlcNAc...) asparagine; by host glycan. 277-278 (EE) is a substrate binding site. Substrate is bound at residue R293. The Ca(2+) site is built by D294, G298, and D325. Position 372 (R372) interacts with substrate. N402 carries N-linked (GlcNAc...) asparagine; by host glycosylation. Y406 acts as the Nucleophile in catalysis.

It belongs to the glycosyl hydrolase 34 family. In terms of assembly, homotetramer. Ca(2+) serves as cofactor. Post-translationally, N-glycosylated.

It localises to the virion membrane. The protein localises to the host apical cell membrane. It carries out the reaction Hydrolysis of alpha-(2-&gt;3)-, alpha-(2-&gt;6)-, alpha-(2-&gt;8)- glycosidic linkages of terminal sialic acid residues in oligosaccharides, glycoproteins, glycolipids, colominic acid and synthetic substrates.. With respect to regulation, inhibited by the neuraminidase inhibitors zanamivir (Relenza) and oseltamivir (Tamiflu). These drugs interfere with the release of progeny virus from infected cells and are effective against all influenza strains. Resistance to neuraminidase inhibitors is quite rare. Its function is as follows. Catalyzes the removal of terminal sialic acid residues from viral and cellular glycoconjugates. Cleaves off the terminal sialic acids on the glycosylated HA during virus budding to facilitate virus release. Additionally helps virus spread through the circulation by further removing sialic acids from the cell surface. These cleavages prevent self-aggregation and ensure the efficient spread of the progeny virus from cell to cell. Otherwise, infection would be limited to one round of replication. Described as a receptor-destroying enzyme because it cleaves a terminal sialic acid from the cellular receptors. May facilitate viral invasion of the upper airways by cleaving the sialic acid moieties on the mucin of the airway epithelial cells. Likely to plays a role in the budding process through its association with lipid rafts during intracellular transport. May additionally display a raft-association independent effect on budding. Plays a role in the determination of host range restriction on replication and virulence. Sialidase activity in late endosome/lysosome traffic seems to enhance virus replication. The protein is Neuraminidase of Aves (Pig).